A 520-amino-acid polypeptide reads, in one-letter code: U3 small nucleolar RNA-associated protein 15 homolog (520 aa).

7 WD repeats span residues Lys36 to Thr75, Arg78 to Gln117, Gly120 to Ser159, Glu162 to Thr202, Glu204 to Val242, Asn246 to Ser285, and Asn287 to Lys326.

As to quaternary structure, part of the small subunit (SSU) processome, composed of more than 70 proteins and the RNA chaperone small nucleolar RNA (snoRNA) U3. May be a component of the proposed t-UTP subcomplex of the ribosomal small subunit (SSU) processome.

It localises to the nucleus. It is found in the nucleolus. Functionally, ribosome biogenesis factor. Involved in nucleolar processing of pre-18S ribosomal RNA. Required for optimal pre-ribosomal RNA transcription by RNA polymerase I. Part of the small subunit (SSU) processome, first precursor of the small eukaryotic ribosomal subunit. During the assembly of the SSU processome in the nucleolus, many ribosome biogenesis factors, an RNA chaperone and ribosomal proteins associate with the nascent pre-rRNA and work in concert to generate RNA folding, modifications, rearrangements and cleavage as well as targeted degradation of pre-ribosomal RNA by the RNA exosome. The chain is U3 small nucleolar RNA-associated protein 15 homolog (UTP15) from Gallus gallus (Chicken).